We begin with the raw amino-acid sequence, 335 residues long: Glycerol-3-phosphate dehydrogenase [NAD(P)+] (335 aa).

NADPH-binding residues include serine 12, tryptophan 13, and lysine 107. Positions 107, 138, and 140 each coordinate sn-glycerol 3-phosphate. Alanine 142 provides a ligand contact to NADPH. Residues lysine 193, aspartate 246, serine 256, arginine 257, and asparagine 258 each coordinate sn-glycerol 3-phosphate. The active-site Proton acceptor is lysine 193. An NADPH-binding site is contributed by arginine 257. The NADPH site is built by valine 281 and glutamate 283.

It belongs to the NAD-dependent glycerol-3-phosphate dehydrogenase family.

It is found in the cytoplasm. The catalysed reaction is sn-glycerol 3-phosphate + NAD(+) = dihydroxyacetone phosphate + NADH + H(+). It carries out the reaction sn-glycerol 3-phosphate + NADP(+) = dihydroxyacetone phosphate + NADPH + H(+). The protein operates within membrane lipid metabolism; glycerophospholipid metabolism. Functionally, catalyzes the reduction of the glycolytic intermediate dihydroxyacetone phosphate (DHAP) to sn-glycerol 3-phosphate (G3P), the key precursor for phospholipid synthesis. This Citrifermentans bemidjiense (strain ATCC BAA-1014 / DSM 16622 / JCM 12645 / Bem) (Geobacter bemidjiensis) protein is Glycerol-3-phosphate dehydrogenase [NAD(P)+].